We begin with the raw amino-acid sequence, 283 residues long: Pyridoxal kinase PdxY (283 aa).

Residue serine 8 coordinates substrate. Positions 110 and 147 each coordinate ATP. Position 219 (aspartate 219) interacts with substrate.

It belongs to the pyridoxine kinase family. PdxY subfamily. As to quaternary structure, homodimer. Mg(2+) is required as a cofactor.

The catalysed reaction is pyridoxal + ATP = pyridoxal 5'-phosphate + ADP + H(+). It functions in the pathway cofactor metabolism; pyridoxal 5'-phosphate salvage; pyridoxal 5'-phosphate from pyridoxal: step 1/1. Functionally, pyridoxal kinase involved in the salvage pathway of pyridoxal 5'-phosphate (PLP). Catalyzes the phosphorylation of pyridoxal to PLP. This Corynebacterium diphtheriae (strain ATCC 700971 / NCTC 13129 / Biotype gravis) protein is Pyridoxal kinase PdxY.